The sequence spans 369 residues: C-C chemokine receptor type 9 (369 aa).

Residues 1–48 (MTPTDFTSPIPNMADDYGSESTSSMEDYVNFNFTDFYCEKNNVRQFAS) are Extracellular-facing. A glycan (N-linked (GlcNAc...) asparagine) is linked at Asn-32. Cystine bridges form between Cys-38/Cys-289 and Cys-119/Cys-198. Residues 49 to 74 (HFLPPLYWLVFIVGALGNSLVILVYW) traverse the membrane as a helical segment. Topologically, residues 75–85 (YCTRVKTMTDM) are cytoplasmic. Residues 86 to 109 (FLLNLAIADLLFLVTLPFWAIAAA) traverse the membrane as a helical segment. At 110-120 (DQWKFQTFMCK) the chain is on the extracellular side. The chain crosses the membrane as a helical span at residues 121 to 150 (VVNSMYKMNFYSCVLLIMCISVDRYIAIAQ). Over 151-159 (AMRAHTWRE) the chain is Cytoplasmic. A helical membrane pass occupies residues 160-185 (KRLLYSKMVCFTIWVLAAALCIPEIL). Over 186–208 (YSQIKEESGIAICTMVYPSDEST) the chain is Extracellular. A helical membrane pass occupies residues 209 to 243 (KLKSAVLTLKVILGFFLPFVVMACCYTIIIHTLIQ). Residues 244-248 (AKKSS) are Cytoplasmic-facing. The chain crosses the membrane as a helical span at residues 249-283 (KHKALKVTITVLTVFVLSQFPYNCILLVQTIDAYA). Residues 284–290 (MFISNCA) are Extracellular-facing. A helical membrane pass occupies residues 291–321 (VSTNIDICFQVTQTIAFFHSCLNPVLYVFVG). At 322–369 (ERFRRDLVKTLKNLGCISQAQWVSFTRREGSLKLSSMLLETTSGALSL) the chain is on the cytoplasmic side.

Belongs to the G-protein coupled receptor 1 family. In terms of tissue distribution, highly expressed in the thymus and low in lymph nodes and spleen.

It localises to the cell membrane. Functionally, receptor for chemokine SCYA25/TECK. Subsequently transduces a signal by increasing the intracellular calcium ions level. (Microbial infection) Alternative coreceptor with CD4 for HIV-1 infection. This chain is C-C chemokine receptor type 9 (CCR9), found in Homo sapiens (Human).